A 250-amino-acid chain; its full sequence is Ubiquinone/menaquinone biosynthesis C-methyltransferase UbiE (250 aa).

S-adenosyl-L-methionine contacts are provided by residues T74, D94, 122–123, and S139; that span reads DA.

Belongs to the class I-like SAM-binding methyltransferase superfamily. MenG/UbiE family.

It catalyses the reaction a 2-demethylmenaquinol + S-adenosyl-L-methionine = a menaquinol + S-adenosyl-L-homocysteine + H(+). The enzyme catalyses a 2-methoxy-6-(all-trans-polyprenyl)benzene-1,4-diol + S-adenosyl-L-methionine = a 5-methoxy-2-methyl-3-(all-trans-polyprenyl)benzene-1,4-diol + S-adenosyl-L-homocysteine + H(+). Its pathway is quinol/quinone metabolism; menaquinone biosynthesis; menaquinol from 1,4-dihydroxy-2-naphthoate: step 2/2. It participates in cofactor biosynthesis; ubiquinone biosynthesis. Methyltransferase required for the conversion of demethylmenaquinol (DMKH2) to menaquinol (MKH2) and the conversion of 2-polyprenyl-6-methoxy-1,4-benzoquinol (DDMQH2) to 2-polyprenyl-3-methyl-6-methoxy-1,4-benzoquinol (DMQH2). This chain is Ubiquinone/menaquinone biosynthesis C-methyltransferase UbiE, found in Roseobacter denitrificans (strain ATCC 33942 / OCh 114) (Erythrobacter sp. (strain OCh 114)).